The primary structure comprises 258 residues: Protein STAY-GREEN LIKE, chloroplastic (258 aa).

The protein belongs to the staygreen family. Strongly expressed in leaves, stems and panicles, and at lower levels in roots and seeds.

Its function is as follows. Promotes chlorophyll degradation in leaves. May be involved in LHCI proteins degradation, regulating the balance between LHCI and LHCII. This Oryza sativa subsp. japonica (Rice) protein is Protein STAY-GREEN LIKE, chloroplastic.